A 154-amino-acid chain; its full sequence is Aspartate carbamoyltransferase regulatory chain (154 aa).

Positions 109, 114, 138, and 141 each coordinate Zn(2+).

The protein belongs to the PyrI family. Contains catalytic and regulatory chains. Zn(2+) is required as a cofactor.

Involved in allosteric regulation of aspartate carbamoyltransferase. The sequence is that of Aspartate carbamoyltransferase regulatory chain from Yersinia pestis.